A 429-amino-acid polypeptide reads, in one-letter code: Serine hydroxymethyltransferase (429 aa).

(6S)-5,6,7,8-tetrahydrofolate is bound by residues leucine 126 and 130-132 (GHL). The residue at position 235 (lysine 235) is an N6-(pyridoxal phosphate)lysine.

Belongs to the SHMT family. As to quaternary structure, homodimer. Requires pyridoxal 5'-phosphate as cofactor.

Its subcellular location is the cytoplasm. The enzyme catalyses (6R)-5,10-methylene-5,6,7,8-tetrahydrofolate + glycine + H2O = (6S)-5,6,7,8-tetrahydrofolate + L-serine. The protein operates within one-carbon metabolism; tetrahydrofolate interconversion. Its pathway is amino-acid biosynthesis; glycine biosynthesis; glycine from L-serine: step 1/1. In terms of biological role, catalyzes the reversible interconversion of serine and glycine with tetrahydrofolate (THF) serving as the one-carbon carrier. This reaction serves as the major source of one-carbon groups required for the biosynthesis of purines, thymidylate, methionine, and other important biomolecules. Also exhibits THF-independent aldolase activity toward beta-hydroxyamino acids, producing glycine and aldehydes, via a retro-aldol mechanism. This is Serine hydroxymethyltransferase from Zymomonas mobilis subsp. mobilis (strain ATCC 31821 / ZM4 / CP4).